The primary structure comprises 393 residues: MPRIGTPLSPTATRVLLCGSGELGKEVVIELQRLGCEVIAVDRYPNAPAMQVAHRNHVISMLDGAALRAVIEQEKPHYIVPEIEAIATATLVELEAEGYTVIPTARAAQLTMNREGIRRLAAEELGLPTSPYRFADSYEDYAAAVAALGFPCVVKPIMSSSGKGQSLLRGPDDVKKAWDYAQEGGRAGKGRVIVEGFIDFDYEITLLTVRHAGGTTFCAPVGHRQEKGDYQESWQPQPMSAKAIAESERIALAVTGALGGRGLFGVELFIKGDMVWFSEVSPRPHDTGLVTLISQDLSEFALHARAILGLPIPAIRQVGPSASAVILVEGESTQPSFSNLGAALAEPDTALRLFGKPEVKGQRRMGVALARDESIEAARAKALRAAQAVKVEL.

N(1)-(5-phospho-beta-D-ribosyl)glycinamide is bound by residues 22–23 and glutamate 82; that span reads EL. ATP contacts are provided by residues arginine 114, lysine 155, 160 to 165, 195 to 198, and glutamate 203; these read SSGKGQ and EGFI. In terms of domain architecture, ATP-grasp spans 119–308; sequence RLAAEELGLP…EFALHARAIL (190 aa). Mg(2+) contacts are provided by glutamate 267 and glutamate 279. Residues aspartate 286, lysine 356, and 363-364 each bind N(1)-(5-phospho-beta-D-ribosyl)glycinamide; that span reads RR.

This sequence belongs to the PurK/PurT family. In terms of assembly, homodimer.

It catalyses the reaction N(1)-(5-phospho-beta-D-ribosyl)glycinamide + formate + ATP = N(2)-formyl-N(1)-(5-phospho-beta-D-ribosyl)glycinamide + ADP + phosphate + H(+). The protein operates within purine metabolism; IMP biosynthesis via de novo pathway; N(2)-formyl-N(1)-(5-phospho-D-ribosyl)glycinamide from N(1)-(5-phospho-D-ribosyl)glycinamide (formate route): step 1/1. Involved in the de novo purine biosynthesis. Catalyzes the transfer of formate to 5-phospho-ribosyl-glycinamide (GAR), producing 5-phospho-ribosyl-N-formylglycinamide (FGAR). Formate is provided by PurU via hydrolysis of 10-formyl-tetrahydrofolate. The protein is Formate-dependent phosphoribosylglycinamide formyltransferase of Azoarcus sp. (strain BH72).